The sequence spans 338 residues: Phenylalanine--tRNA ligase alpha subunit (338 aa).

Glu-253 contributes to the Mg(2+) binding site.

It belongs to the class-II aminoacyl-tRNA synthetase family. Phe-tRNA synthetase alpha subunit type 1 subfamily. In terms of assembly, tetramer of two alpha and two beta subunits. It depends on Mg(2+) as a cofactor.

It is found in the cytoplasm. It carries out the reaction tRNA(Phe) + L-phenylalanine + ATP = L-phenylalanyl-tRNA(Phe) + AMP + diphosphate + H(+). This is Phenylalanine--tRNA ligase alpha subunit from Trichlorobacter lovleyi (strain ATCC BAA-1151 / DSM 17278 / SZ) (Geobacter lovleyi).